A 252-amino-acid chain; its full sequence is Probable transcriptional regulatory protein RF_0799 (252 aa).

The segment at 1–21 is disordered; it reads MAGHSKFKNIQHRKGAQDKKR.

This sequence belongs to the TACO1 family.

The protein localises to the cytoplasm. The polypeptide is Probable transcriptional regulatory protein RF_0799 (Rickettsia felis (strain ATCC VR-1525 / URRWXCal2) (Rickettsia azadi)).